The sequence spans 105 residues: Large ribosomal subunit protein uL24 (105 aa).

It belongs to the universal ribosomal protein uL24 family. As to quaternary structure, part of the 50S ribosomal subunit.

Functionally, one of two assembly initiator proteins, it binds directly to the 5'-end of the 23S rRNA, where it nucleates assembly of the 50S subunit. In terms of biological role, one of the proteins that surrounds the polypeptide exit tunnel on the outside of the subunit. This is Large ribosomal subunit protein uL24 from Nitrosospira multiformis (strain ATCC 25196 / NCIMB 11849 / C 71).